We begin with the raw amino-acid sequence, 710 residues long: Fatty acid oxidation complex subunit alpha (710 aa).

Residues 1-190 (MSMEKTFNLA…KMGLVNDVVP (190 aa)) are enoyl-CoA hydratase. Positions 310–710 (RKVKKVMVLG…ASDGSQFYKK (401 aa)) are 3-hydroxyacyl-CoA dehydrogenase.

This sequence in the N-terminal section; belongs to the enoyl-CoA hydratase/isomerase family. In the central section; belongs to the 3-hydroxyacyl-CoA dehydrogenase family. Heterotetramer of two alpha chains (FadJ) and two beta chains (FadI).

Its subcellular location is the cytoplasm. It carries out the reaction a (3S)-3-hydroxyacyl-CoA = a (2E)-enoyl-CoA + H2O. The catalysed reaction is a 4-saturated-(3S)-3-hydroxyacyl-CoA = a (3E)-enoyl-CoA + H2O. The enzyme catalyses a (3S)-3-hydroxyacyl-CoA + NAD(+) = a 3-oxoacyl-CoA + NADH + H(+). It catalyses the reaction (3S)-3-hydroxybutanoyl-CoA = (3R)-3-hydroxybutanoyl-CoA. It participates in lipid metabolism; fatty acid beta-oxidation. Functionally, catalyzes the formation of a hydroxyacyl-CoA by addition of water on enoyl-CoA. Also exhibits 3-hydroxyacyl-CoA epimerase and 3-hydroxyacyl-CoA dehydrogenase activities. This Shewanella frigidimarina (strain NCIMB 400) protein is Fatty acid oxidation complex subunit alpha.